The following is a 343-amino-acid chain: Aspartate-semialdehyde dehydrogenase (343 aa).

Residues 20 to 23 and 48 to 49 each bind NADP(+); these read SGAV and RS. A phosphate-binding site is contributed by arginine 108. Catalysis depends on cysteine 137, which acts as the Acyl-thioester intermediate. Glutamine 164 serves as a coordination point for substrate. 167-168 contributes to the NADP(+) binding site; sequence SG. Lysine 221 lines the phosphate pocket. Position 243 (arginine 243) interacts with substrate. Catalysis depends on histidine 250, which acts as the Proton acceptor. Glutamine 323 serves as a coordination point for NADP(+).

Belongs to the aspartate-semialdehyde dehydrogenase family. In terms of assembly, homodimer.

The enzyme catalyses L-aspartate 4-semialdehyde + phosphate + NADP(+) = 4-phospho-L-aspartate + NADPH + H(+). The protein operates within amino-acid biosynthesis; L-lysine biosynthesis via DAP pathway; (S)-tetrahydrodipicolinate from L-aspartate: step 2/4. It participates in amino-acid biosynthesis; L-methionine biosynthesis via de novo pathway; L-homoserine from L-aspartate: step 2/3. It functions in the pathway amino-acid biosynthesis; L-threonine biosynthesis; L-threonine from L-aspartate: step 2/5. Its function is as follows. Catalyzes the NADPH-dependent formation of L-aspartate-semialdehyde (L-ASA) by the reductive dephosphorylation of L-aspartyl-4-phosphate. In Prochlorococcus marinus (strain SARG / CCMP1375 / SS120), this protein is Aspartate-semialdehyde dehydrogenase.